Consider the following 506-residue polypeptide: Histidine--tRNA ligase, mitochondrial (506 aa).

Residues 1 to 33 (MPQLGLLPGRAWTVLLGLLRPPPGALCIRAVRS) constitute a mitochondrion transit peptide. A Phosphoserine modification is found at serine 67. L-histidine-binding positions include 131 to 133 (DLT), arginine 158, glutamine 174, aspartate 178, arginine 327, and 331 to 332 (YY). Lysine 444 bears the N6-acetyllysine mark.

Belongs to the class-II aminoacyl-tRNA synthetase family. Homodimer.

It localises to the mitochondrion. It carries out the reaction tRNA(His) + L-histidine + ATP = L-histidyl-tRNA(His) + AMP + diphosphate + H(+). In terms of biological role, mitochondrial aminoacyl-tRNA synthetase that catalyzes the ATP-dependent ligation of histidine to the 3'-end of its cognate tRNA, via the formation of an aminoacyl-adenylate intermediate (His-AMP). The polypeptide is Histidine--tRNA ligase, mitochondrial (HARS2) (Bos taurus (Bovine)).